The sequence spans 712 residues: tRNA 5-methylaminomethyl-2-thiouridine biosynthesis bifunctional protein MnmC (712 aa).

The segment at 1 to 268 (MPNMRHRVNS…RRALRHAQSD (268 aa)) is tRNA (mnm(5)s(2)U34)-methyltransferase. The segment at 292-712 (IGGGVASTHL…MRKLIKGKAL (421 aa)) is FAD-dependent cmnm(5)s(2)U34 oxidoreductase.

It in the N-terminal section; belongs to the methyltransferase superfamily. tRNA (mnm(5)s(2)U34)-methyltransferase family. This sequence in the C-terminal section; belongs to the DAO family. It depends on FAD as a cofactor.

It localises to the cytoplasm. The catalysed reaction is 5-aminomethyl-2-thiouridine(34) in tRNA + S-adenosyl-L-methionine = 5-methylaminomethyl-2-thiouridine(34) in tRNA + S-adenosyl-L-homocysteine + H(+). Its function is as follows. Catalyzes the last two steps in the biosynthesis of 5-methylaminomethyl-2-thiouridine (mnm(5)s(2)U) at the wobble position (U34) in tRNA. Catalyzes the FAD-dependent demodification of cmnm(5)s(2)U34 to nm(5)s(2)U34, followed by the transfer of a methyl group from S-adenosyl-L-methionine to nm(5)s(2)U34, to form mnm(5)s(2)U34. The sequence is that of tRNA 5-methylaminomethyl-2-thiouridine biosynthesis bifunctional protein MnmC from Shewanella sediminis (strain HAW-EB3).